The following is a 166-amino-acid chain: Cyclic pyranopterin monophosphate synthase (166 aa).

Substrate-binding positions include 75-77 (LCH) and 113-114 (ME). The active site involves aspartate 128.

It belongs to the MoaC family. Homohexamer; trimer of dimers.

It carries out the reaction (8S)-3',8-cyclo-7,8-dihydroguanosine 5'-triphosphate = cyclic pyranopterin phosphate + diphosphate. The protein operates within cofactor biosynthesis; molybdopterin biosynthesis. Catalyzes the conversion of (8S)-3',8-cyclo-7,8-dihydroguanosine 5'-triphosphate to cyclic pyranopterin monophosphate (cPMP). This Thermomicrobium roseum (strain ATCC 27502 / DSM 5159 / P-2) protein is Cyclic pyranopterin monophosphate synthase.